A 180-amino-acid polypeptide reads, in one-letter code: UPF0102 protein Tery_0733 (180 aa).

The protein belongs to the UPF0102 family.

In Trichodesmium erythraeum (strain IMS101), this protein is UPF0102 protein Tery_0733.